The chain runs to 324 residues: Polycomb complex protein BMI-1 (324 aa).

The RING-type zinc finger occupies 18–57; that stretch reads CVLCGGYFIDATTIIECLHSFCKTCIVRYLETSKYCPICD. A Nuclear localization signal motif is present at residues 81-95; that stretch reads KLVPGLFKNEMKRRR. The interval 160-180 is interaction with PHC2; it reads RYLRCPAAMTVMHLRKFLRSK. An interaction with E4F1 region spans residues 162 to 226; the sequence is LRCPAAMTVM…GPLPLKYRVR (65 aa). Residues 232–324 are disordered; that stretch reads MKMSHQRDGL…LNGSSATSSG (93 aa). Residues 264-276 are compositionally biased toward low complexity; sequence PSTSSCLPSPSTP. The span at 277 to 307 shows a compositional bias: polar residues; that stretch reads VQSPHPQFPHISSTMNGTSNSPSANHQSSFA. Residues 313–324 are compositionally biased toward low complexity; sequence SSLNGSSATSSG.

As to quaternary structure, component of a PRC1-like complex. Identified in a PRC1-like HPRC-H complex with CBX2, CBX4, CBX8, PHC1, PHC2, PHC3, RING1 and RNF2. Interacts with RNF2/RING2. Interacts with RING1. Part of a complex that contains RNF2, UB2D3 and BMI1, where RNF2 and BMI1 form a tight heterodimer, and UB2D3 interacts only with RNF2. The complex composed of RNF2, UB2D3 and BMI1 binds nucleosomes, and has activity only with nucleosomal histone H2A. Interacts with CBX7 and CBX8. Interacts with SPOP. Part of a complex consisting of BMI1, CUL3 and SPOP. Interacts with E4F1. Interacts with PHC2. Interacts with zinc finger protein ZNF277. May be part of a complex including at least ZNF277, BMI1 and RNF2/RING2. In terms of processing, may be polyubiquitinated; which does not lead to proteasomal degradation. Monoubiquitinated. In terms of tissue distribution, detected in most organs with high expression levels in thymus, heart, brain and testis.

It localises to the nucleus. Its subcellular location is the cytoplasm. In terms of biological role, component of a Polycomb group (PcG) multiprotein PRC1-like complex, a complex class required to maintain the transcriptionally repressive state of many genes, including Hox genes, throughout development. PcG PRC1 complex acts via chromatin remodeling and modification of histones; it mediates monoubiquitination of histone H2A 'Lys-119', rendering chromatin heritably changed in its expressibility. The complex composed of RNF2, UB2D3 and BMI1 binds nucleosomes, and has activity only with nucleosomal histone H2A. In the PRC1-like complex, regulates the E3 ubiquitin-protein ligase activity of RNF2/RING2. The sequence is that of Polycomb complex protein BMI-1 (Bmi1) from Mus musculus (Mouse).